The chain runs to 137 residues: Large ribosomal subunit protein uL16 (137 aa).

The protein belongs to the universal ribosomal protein uL16 family. In terms of assembly, part of the 50S ribosomal subunit.

Binds 23S rRNA and is also seen to make contacts with the A and possibly P site tRNAs. The chain is Large ribosomal subunit protein uL16 from Solidesulfovibrio magneticus (strain ATCC 700980 / DSM 13731 / RS-1) (Desulfovibrio magneticus).